Here is a 551-residue protein sequence, read N- to C-terminus: Tetrachloroethene reductive dehalogenase (551 aa).

Residues 1–39 (MGEINRRNFLKVSILGAAAAAVASASAVKGMVSPLVADA) constitute a signal peptide (tat-type signal). The 30-residue stretch at 411–440 (PRKFGVREFCRLCKKCADACPAQAISHEKD) folds into the 4Fe-4S ferredoxin-type 1 domain. Residues Cys420, Cys423, Cys426, Cys430, Cys467, Cys478, Cys481, and Cys485 each contribute to the [4Fe-4S] cluster site. Residues 478–496 (CSNCVAVCSWNKVETWNHD) form the 4Fe-4S ferredoxin-type 2 domain.

This sequence belongs to the PceA family. [4Fe-4S] cluster is required as a cofactor. Requires corrinoid as cofactor. Predicted to be exported by the Tat system. The position of the signal peptide cleavage has not been experimentally proven.

It is found in the cell membrane. The enzyme catalyses trichloroethene + chloride + A + H(+) = tetrachloroethene + AH2. The catalysed reaction is trichloroethene + AH2 = (Z)-1,2-dichloroethene + chloride + A + H(+). In terms of biological role, catalyzes the reductive dechlorination of tetrachloroethene (PCE) to trichloroethene (TCE) and of trichloroethene to cis-1,2-dichloroethene (DCE). This is Tetrachloroethene reductive dehalogenase from Desulfitobacterium hafniense (Desulfitobacterium frappieri).